The chain runs to 488 residues: Tocopherol cyclase, chloroplastic (488 aa).

A chloroplast-targeting transit peptide spans M1–R76.

The protein resides in the plastid. It is found in the chloroplast. The protein localises to the plastoglobule. It carries out the reaction delta-tocopherol = 2-methyl-6-phytyl-1,4-benzene-1,4-diol. The enzyme catalyses gamma-tocopherol = 2,3-dimethyl-6-phytylbenzene-1,4-diol. It catalyses the reaction delta-tocotrienol = 6-geranylgeranyl-2-methylbenzene-1,4-diol. The catalysed reaction is gamma-tocotrienol = 6-geranylgeranyl-2,3-dimethylbenzene-1,4-diol. Its pathway is cofactor biosynthesis; tocopherol biosynthesis. Involved in the synthesis of both tocopherols and tocotrienols (vitamin E), which presumably protect photosynthetic complexes from oxidative stress. Catalyzes the conversion of 2-methyl-6-phytyl-1,4-hydroquinone and 2,3-dimethyl-5-phytyl-1,4-hydroquinone (DMPQ) to delta- and gamma-tocopherol respectively. Also converts 2,3-dimethyl-5-geranylgeranyl-1,4-hydroquinone (DMGQ) to gamma-tocotrienol. The sequence is that of Tocopherol cyclase, chloroplastic (VTE1) from Arabidopsis thaliana (Mouse-ear cress).